A 101-amino-acid chain; its full sequence is NADH-quinone oxidoreductase subunit K (101 aa).

3 helical membrane passes run 4-24 (LAHFLVLGAILFAISIVGIFL), 30-50 (IVLLMALELLLLAVNMNFVAF), and 61-81 (VFVFFILTVAAAESAIGLAIL).

Belongs to the complex I subunit 4L family. As to quaternary structure, NDH-1 is composed of 14 different subunits. Subunits NuoA, H, J, K, L, M, N constitute the membrane sector of the complex.

Its subcellular location is the cell inner membrane. The catalysed reaction is a quinone + NADH + 5 H(+)(in) = a quinol + NAD(+) + 4 H(+)(out). Functionally, NDH-1 shuttles electrons from NADH, via FMN and iron-sulfur (Fe-S) centers, to quinones in the respiratory chain. The immediate electron acceptor for the enzyme in this species is believed to be ubiquinone. Couples the redox reaction to proton translocation (for every two electrons transferred, four hydrogen ions are translocated across the cytoplasmic membrane), and thus conserves the redox energy in a proton gradient. In Cupriavidus metallidurans (strain ATCC 43123 / DSM 2839 / NBRC 102507 / CH34) (Ralstonia metallidurans), this protein is NADH-quinone oxidoreductase subunit K.